Consider the following 62-residue polypeptide: UPF0434 protein FTL_1400 (62 aa).

This sequence belongs to the UPF0434 family.

The sequence is that of UPF0434 protein FTL_1400 from Francisella tularensis subsp. holarctica (strain LVS).